The chain runs to 125 residues: Small ribosomal subunit protein uS12 (125 aa).

Position 89 is a 3-methylthioaspartic acid (D89). The interval 105–125 is disordered; the sequence is AGVKDRKQARSKYGAKRPKAA. Residues 113–125 are compositionally biased toward basic residues; sequence ARSKYGAKRPKAA.

Belongs to the universal ribosomal protein uS12 family. In terms of assembly, part of the 30S ribosomal subunit. Contacts proteins S8 and S17. May interact with IF1 in the 30S initiation complex.

Its function is as follows. With S4 and S5 plays an important role in translational accuracy. In terms of biological role, interacts with and stabilizes bases of the 16S rRNA that are involved in tRNA selection in the A site and with the mRNA backbone. Located at the interface of the 30S and 50S subunits, it traverses the body of the 30S subunit contacting proteins on the other side and probably holding the rRNA structure together. The combined cluster of proteins S8, S12 and S17 appears to hold together the shoulder and platform of the 30S subunit. The chain is Small ribosomal subunit protein uS12 from Methylobacillus flagellatus (strain ATCC 51484 / DSM 6875 / VKM B-1610 / KT).